Here is a 329-residue protein sequence, read N- to C-terminus: DNA-directed RNA polymerase subunit alpha (329 aa).

The alpha N-terminal domain (alpha-NTD) stretch occupies residues 1 to 235 (MQGSVTEFLK…EQLEAFVDLR (235 aa)). Residues 249–329 (FDPILLRPVD…NWPPASIADE (81 aa)) are alpha C-terminal domain (alpha-CTD).

Belongs to the RNA polymerase alpha chain family. As to quaternary structure, homodimer. The RNAP catalytic core consists of 2 alpha, 1 beta, 1 beta' and 1 omega subunit. When a sigma factor is associated with the core the holoenzyme is formed, which can initiate transcription.

The catalysed reaction is RNA(n) + a ribonucleoside 5'-triphosphate = RNA(n+1) + diphosphate. In terms of biological role, DNA-dependent RNA polymerase catalyzes the transcription of DNA into RNA using the four ribonucleoside triphosphates as substrates. The polypeptide is DNA-directed RNA polymerase subunit alpha (Pectobacterium atrosepticum (strain SCRI 1043 / ATCC BAA-672) (Erwinia carotovora subsp. atroseptica)).